A 656-amino-acid polypeptide reads, in one-letter code: Fidgetin-like protein 1 (656 aa).

Over residues 293–302 the composition is skewed to polar residues; the sequence is KYSNQPQRNP. Residues 293–354 form a disordered region; sequence KYSNQPQRNP…QGNSEMNAPS (62 aa). Basic and acidic residues predominate over residues 331–340; sequence RQEDVQDSNR. Residues alanine 386 and 426-431 contribute to the ATP site; that span reads GTGKTL.

It belongs to the AAA ATPase family. In terms of assembly, hexamer. The cofactor is Mg(2+).

The protein resides in the nucleus. It localises to the cytoplasm. It is found in the perinuclear region. It carries out the reaction ATP + H2O = ADP + phosphate + H(+). Functionally, may be involved in DNA double-strand break (DBS) repair via homologous recombination (HR). May regulate osteoblast proliferation and differentiation. The chain is Fidgetin-like protein 1 (fignl1) from Xenopus tropicalis (Western clawed frog).